The chain runs to 89 residues: MPRSTKKGPFFDHHLIKKVESAAGSKRPIKTCSRRSVILPQMVGHTIAIHNGKNYHPVVINENMVGHKLGEFSITRVFKGHCGDKKSGK.

It belongs to the universal ribosomal protein uS19 family.

In terms of biological role, protein S19 forms a complex with S13 that binds strongly to the 16S ribosomal RNA. This Xylella fastidiosa (strain M23) protein is Small ribosomal subunit protein uS19.